The sequence spans 215 residues: Deoxyribose-phosphate aldolase (215 aa).

Aspartate 89 (proton donor/acceptor) is an active-site residue. The Schiff-base intermediate with acetaldehyde role is filled by lysine 150. Lysine 174 (proton donor/acceptor) is an active-site residue.

The protein belongs to the DeoC/FbaB aldolase family. DeoC type 1 subfamily.

The protein localises to the cytoplasm. The catalysed reaction is 2-deoxy-D-ribose 5-phosphate = D-glyceraldehyde 3-phosphate + acetaldehyde. It participates in carbohydrate degradation; 2-deoxy-D-ribose 1-phosphate degradation; D-glyceraldehyde 3-phosphate and acetaldehyde from 2-deoxy-alpha-D-ribose 1-phosphate: step 2/2. Catalyzes a reversible aldol reaction between acetaldehyde and D-glyceraldehyde 3-phosphate to generate 2-deoxy-D-ribose 5-phosphate. The protein is Deoxyribose-phosphate aldolase of Natronomonas pharaonis (strain ATCC 35678 / DSM 2160 / CIP 103997 / JCM 8858 / NBRC 14720 / NCIMB 2260 / Gabara) (Halobacterium pharaonis).